We begin with the raw amino-acid sequence, 261 residues long: Cytochrome c oxidase subunit 3 (261 aa).

Over 1 to 15 (MTHQTHAYHMVNPSP) the chain is Mitochondrial matrix. A helical membrane pass occupies residues 16–34 (WPLTGALSALLMTSGLIMW). Topologically, residues 35 to 40 (FHFNST) are mitochondrial intermembrane. The helical transmembrane segment at 41–66 (TLLMLGLTTNMLTMYQWWRDIIREST) threads the bilayer. Over 67 to 72 (FQGHHT) the chain is Mitochondrial matrix. A helical membrane pass occupies residues 73 to 105 (PSVQKGLRYGMILFIISEVLFFTGFFWAFYHSS). The Mitochondrial intermembrane portion of the chain corresponds to 106 to 128 (LAPTPELGGCWPPTGIHPLNPLE). A helical membrane pass occupies residues 129–152 (VPLLNTSVLLASGVSITWAHHSLM). The Mitochondrial matrix segment spans residues 153–155 (EGN). Residues 156-183 (RNHMLQALFITIALGVYFTLLQASEYYE) traverse the membrane as a helical segment. Residues 184 to 190 (APFTISD) lie on the Mitochondrial intermembrane side of the membrane. A helical membrane pass occupies residues 191 to 223 (GVYGSTFFVATGFHGLHVIIGSTFLIVCFFRQL). At 224 to 232 (KFHFTSNHH) the chain is on the mitochondrial matrix side. The chain crosses the membrane as a helical span at residues 233 to 256 (FGFEAAAWYWHFVDVVWLFLYVSI). Residues 257–261 (YWWGS) lie on the Mitochondrial intermembrane side of the membrane.

Belongs to the cytochrome c oxidase subunit 3 family. As to quaternary structure, component of the cytochrome c oxidase (complex IV, CIV), a multisubunit enzyme composed of 14 subunits. The complex is composed of a catalytic core of 3 subunits MT-CO1, MT-CO2 and MT-CO3, encoded in the mitochondrial DNA, and 11 supernumerary subunits COX4I, COX5A, COX5B, COX6A, COX6B, COX6C, COX7A, COX7B, COX7C, COX8 and NDUFA4, which are encoded in the nuclear genome. The complex exists as a monomer or a dimer and forms supercomplexes (SCs) in the inner mitochondrial membrane with NADH-ubiquinone oxidoreductase (complex I, CI) and ubiquinol-cytochrome c oxidoreductase (cytochrome b-c1 complex, complex III, CIII), resulting in different assemblies (supercomplex SCI(1)III(2)IV(1) and megacomplex MCI(2)III(2)IV(2)).

The protein localises to the mitochondrion inner membrane. The enzyme catalyses 4 Fe(II)-[cytochrome c] + O2 + 8 H(+)(in) = 4 Fe(III)-[cytochrome c] + 2 H2O + 4 H(+)(out). Functionally, component of the cytochrome c oxidase, the last enzyme in the mitochondrial electron transport chain which drives oxidative phosphorylation. The respiratory chain contains 3 multisubunit complexes succinate dehydrogenase (complex II, CII), ubiquinol-cytochrome c oxidoreductase (cytochrome b-c1 complex, complex III, CIII) and cytochrome c oxidase (complex IV, CIV), that cooperate to transfer electrons derived from NADH and succinate to molecular oxygen, creating an electrochemical gradient over the inner membrane that drives transmembrane transport and the ATP synthase. Cytochrome c oxidase is the component of the respiratory chain that catalyzes the reduction of oxygen to water. Electrons originating from reduced cytochrome c in the intermembrane space (IMS) are transferred via the dinuclear copper A center (CU(A)) of subunit 2 and heme A of subunit 1 to the active site in subunit 1, a binuclear center (BNC) formed by heme A3 and copper B (CU(B)). The BNC reduces molecular oxygen to 2 water molecules using 4 electrons from cytochrome c in the IMS and 4 protons from the mitochondrial matrix. The polypeptide is Cytochrome c oxidase subunit 3 (MT-CO3) (Pelea capreolus (Gray rhebok)).